The sequence spans 189 residues: Glucose-6-phosphate isomerase (189 aa).

Residues His-88, His-90, Glu-97, and His-136 each contribute to the Fe cation site.

It belongs to the archaeal-type GPI family. Homodimer. Requires Fe cation as cofactor.

It localises to the cytoplasm. The enzyme catalyses alpha-D-glucose 6-phosphate = beta-D-fructose 6-phosphate. The protein operates within carbohydrate degradation; glycolysis; D-glyceraldehyde 3-phosphate and glycerone phosphate from D-glucose: step 2/4. The protein is Glucose-6-phosphate isomerase (pgiA) of Pyrococcus horikoshii (strain ATCC 700860 / DSM 12428 / JCM 9974 / NBRC 100139 / OT-3).